Consider the following 391-residue polypeptide: Polysialic acid biosynthesis protein P7 (391 aa).

Its function is as follows. May be involved in the synthesis of polysialic acid (PSA). The sequence is that of Polysialic acid biosynthesis protein P7 (neuC) from Escherichia coli.